A 323-amino-acid polypeptide reads, in one-letter code: tRNA U34 carboxymethyltransferase (323 aa).

Carboxy-S-adenosyl-L-methionine is bound by residues K91, W105, K110, G130, D152–T154, I181–E182, M196, Y200, and R315.

The protein belongs to the class I-like SAM-binding methyltransferase superfamily. CmoB family. As to quaternary structure, homotetramer.

It catalyses the reaction carboxy-S-adenosyl-L-methionine + 5-hydroxyuridine(34) in tRNA = 5-carboxymethoxyuridine(34) in tRNA + S-adenosyl-L-homocysteine + H(+). Functionally, catalyzes carboxymethyl transfer from carboxy-S-adenosyl-L-methionine (Cx-SAM) to 5-hydroxyuridine (ho5U) to form 5-carboxymethoxyuridine (cmo5U) at position 34 in tRNAs. This Shigella flexneri protein is tRNA U34 carboxymethyltransferase.